A 2059-amino-acid polypeptide reads, in one-letter code: Desmoplakin-A (2059 aa).

Residues 1–11 are compositionally biased toward polar residues; the sequence is MSLSGSQTRLH. The segment at 1–25 is disordered; the sequence is MSLSGSQTRLHQISRRSSSRPDLTA. 2 coiled-coil regions span residues 320–354 and 397–453; these read IPQK…LLKN and FKEA…VQTL. Positions 665 to 690 are disordered; it reads EVSSGKTATGVSSGKTATGVSSGKTS. The span at 671-690 shows a compositional bias: low complexity; that stretch reads TATGVSSGKTATGVSSGKTS. Coiled-coil stretches lie at residues 1062 to 1229 and 1261 to 1383; these read MEEL…AELE and LQQD…LQQR. Plectin repeat units lie at residues 1450–1488, 1489–1526, 1564–1602, 1666–1694, 1847–1885, and 1923–1961; these read YLGG…TLEL, LEAQ…KDKL, LLEA…NEIL, IVDP…FLEL, LLEA…SVKL, and FLEF…AQKL. Residues 2008 to 2059 form a disordered region; it reads KGISSPYNVSSGPSSRSGSRAGSRTGSRSGSRRGSVDYSSSSVSYTFFSSAS. Low complexity predominate over residues 2011-2059; it reads SSPYNVSSGPSSRSGSRAGSRTGSRSGSRRGSVDYSSSSVSYTFFSSAS.

It belongs to the plakin or cytolinker family.

The protein resides in the cell junction. It localises to the desmosome. Its subcellular location is the cell membrane. Its function is as follows. Involved in the organization of desmosome cell-cell junctions. Of particular importance in cell adhesion in the skin and during cardiac development. May also play a role in the regulation of Wnt, TGF-beta and Hippo signaling pathways. In Danio rerio (Zebrafish), this protein is Desmoplakin-A.